The primary structure comprises 274 residues: Diaminopimelate epimerase (274 aa).

Substrate is bound by residues Asn-11, Gln-44, and Asn-64. Cys-73 (proton donor) is an active-site residue. Residues 74-75, Asn-157, Asn-190, and 208-209 contribute to the substrate site; these read GN and ER. Cys-217 functions as the Proton acceptor in the catalytic mechanism. 218-219 contributes to the substrate binding site; the sequence is GS.

Belongs to the diaminopimelate epimerase family. Homodimer.

Its subcellular location is the cytoplasm. The catalysed reaction is (2S,6S)-2,6-diaminopimelate = meso-2,6-diaminopimelate. It functions in the pathway amino-acid biosynthesis; L-lysine biosynthesis via DAP pathway; DL-2,6-diaminopimelate from LL-2,6-diaminopimelate: step 1/1. In terms of biological role, catalyzes the stereoinversion of LL-2,6-diaminopimelate (L,L-DAP) to meso-diaminopimelate (meso-DAP), a precursor of L-lysine and an essential component of the bacterial peptidoglycan. This is Diaminopimelate epimerase from Escherichia coli O81 (strain ED1a).